Consider the following 162-residue polypeptide: SsrA-binding protein (162 aa).

A disordered region spans residues 140–162; that stretch reads EDRRHDIKERETKREMDRAMRRR.

The protein belongs to the SmpB family.

It is found in the cytoplasm. Functionally, required for rescue of stalled ribosomes mediated by trans-translation. Binds to transfer-messenger RNA (tmRNA), required for stable association of tmRNA with ribosomes. tmRNA and SmpB together mimic tRNA shape, replacing the anticodon stem-loop with SmpB. tmRNA is encoded by the ssrA gene; the 2 termini fold to resemble tRNA(Ala) and it encodes a 'tag peptide', a short internal open reading frame. During trans-translation Ala-aminoacylated tmRNA acts like a tRNA, entering the A-site of stalled ribosomes, displacing the stalled mRNA. The ribosome then switches to translate the ORF on the tmRNA; the nascent peptide is terminated with the 'tag peptide' encoded by the tmRNA and targeted for degradation. The ribosome is freed to recommence translation, which seems to be the essential function of trans-translation. This is SsrA-binding protein from Myxococcus xanthus (strain DK1622).